A 205-amino-acid chain; its full sequence is MTERGLLIVLSGPSGVGKGTVREAVFKDPETSFDYSISMTTRLPREGEQDGVDYYFRSREVFEQAIKDGKMLEYAEYVGNYYGTPLEYVEEKLAAGVDIFLEIEVQGAMQVRKAMPEGIFIFLTPPDLSELKNRIIGRGTESMEVVEERMETAKKEIEMMASYDYAVVNDVVANAVQKIKGIVETEHLKTERVIHRYKKMLEGLQ.

The Guanylate kinase-like domain maps to 5 to 184 (GLLIVLSGPS…AVQKIKGIVE (180 aa)). Position 12-19 (12-19 (GPSGVGKG)) interacts with ATP.

Belongs to the guanylate kinase family.

The protein resides in the cytoplasm. The catalysed reaction is GMP + ATP = GDP + ADP. Its function is as follows. Essential for recycling GMP and indirectly, cGMP. This is Guanylate kinase from Listeria monocytogenes serotype 4b (strain F2365).